The chain runs to 507 residues: Histidine--tRNA ligase (507 aa).

It belongs to the class-II aminoacyl-tRNA synthetase family. As to quaternary structure, homodimer.

Its subcellular location is the cytoplasm. The catalysed reaction is tRNA(His) + L-histidine + ATP = L-histidyl-tRNA(His) + AMP + diphosphate + H(+). The chain is Histidine--tRNA ligase from Rhizobium leguminosarum bv. trifolii (strain WSM2304).